Here is a 494-residue protein sequence, read N- to C-terminus: Guanosine-5'-triphosphate,3'-diphosphate pyrophosphatase (494 aa).

This sequence belongs to the GppA/Ppx family. GppA subfamily.

The catalysed reaction is guanosine 3'-diphosphate 5'-triphosphate + H2O = guanosine 3',5'-bis(diphosphate) + phosphate + H(+). It functions in the pathway purine metabolism; ppGpp biosynthesis; ppGpp from GTP: step 2/2. Catalyzes the conversion of pppGpp to ppGpp. Guanosine pentaphosphate (pppGpp) is a cytoplasmic signaling molecule which together with ppGpp controls the 'stringent response', an adaptive process that allows bacteria to respond to amino acid starvation, resulting in the coordinated regulation of numerous cellular activities. The protein is Guanosine-5'-triphosphate,3'-diphosphate pyrophosphatase of Erwinia tasmaniensis (strain DSM 17950 / CFBP 7177 / CIP 109463 / NCPPB 4357 / Et1/99).